The chain runs to 113 residues: uncharacterized protein (113 aa).

The SWIM-type zinc-finger motif lies at 49–91 (FFVVVGKEEYVVEGGFCTCPDFLVNLKGKSPCAHIIAVEVAKI).

This is an uncharacterized protein from Archaeoglobus fulgidus (strain ATCC 49558 / DSM 4304 / JCM 9628 / NBRC 100126 / VC-16).